Consider the following 127-residue polypeptide: Large ribosomal subunit protein bL17 (127 aa).

Belongs to the bacterial ribosomal protein bL17 family. Part of the 50S ribosomal subunit. Contacts protein L32.

The sequence is that of Large ribosomal subunit protein bL17 from Levilactobacillus brevis (strain ATCC 367 / BCRC 12310 / CIP 105137 / JCM 1170 / LMG 11437 / NCIMB 947 / NCTC 947) (Lactobacillus brevis).